Consider the following 104-residue polypeptide: UPF0213 protein in VLF1-GP41 intergenic region (104 aa).

A GIY-YIG domain is found at K9–K89.

The protein belongs to the UPF0213 family.

The sequence is that of UPF0213 protein in VLF1-GP41 intergenic region from Autographa californica nuclear polyhedrosis virus (AcMNPV).